Here is a 209-residue protein sequence, read N- to C-terminus: Uracil phosphoribosyltransferase (209 aa).

Residues R79, R104, and D131–S139 each bind 5-phospho-alpha-D-ribose 1-diphosphate. Uracil-binding positions include I194 and G199–A201. D200 serves as a coordination point for 5-phospho-alpha-D-ribose 1-diphosphate.

The protein belongs to the UPRTase family. Mg(2+) serves as cofactor.

It catalyses the reaction UMP + diphosphate = 5-phospho-alpha-D-ribose 1-diphosphate + uracil. It functions in the pathway pyrimidine metabolism; UMP biosynthesis via salvage pathway; UMP from uracil: step 1/1. Allosterically activated by GTP. In terms of biological role, catalyzes the conversion of uracil and 5-phospho-alpha-D-ribose 1-diphosphate (PRPP) to UMP and diphosphate. The sequence is that of Uracil phosphoribosyltransferase from Streptococcus agalactiae serotype III (strain NEM316).